The chain runs to 87 residues: MSAQQFYGDKGYAPAPPQQAYGGPNYYPPQQNYPQQGYAPPQGYPQGGYPAQQPMYVQQPQASDPGGDLCCGLLTGLACCCCLDAMF.

The interval 1 to 64 (MSAQQFYGDK…MYVQQPQASD (64 aa)) is disordered. Over residues 18 to 41 (QQAYGGPNYYPPQQNYPQQGYAPP) the composition is skewed to low complexity.

It belongs to the CYSTM1 family. In terms of processing, palmitoylated.

Its subcellular location is the cell membrane. It localises to the cell tip. Its function is as follows. Required for the maintenance of viability of cells in stationary phase and in starvation conditions. This is Lipid-anchored plasma membrane protein uvi15 (uvi15) from Schizosaccharomyces pombe (strain 972 / ATCC 24843) (Fission yeast).